Here is a 155-residue protein sequence, read N- to C-terminus: Transcriptional repressor NrdR (155 aa).

Residues 3–34 fold into a zinc finger; that stretch reads CPFCGHSNTQVLDTRMSEDGDAVRRRRRCEAC. The 91-residue stretch at 49–139 folds into the ATP-cone domain; the sequence is PAIVKKNGSR…VYRSFEDVSE (91 aa).

It belongs to the NrdR family. Zn(2+) serves as cofactor.

Negatively regulates transcription of bacterial ribonucleotide reductase nrd genes and operons by binding to NrdR-boxes. The polypeptide is Transcriptional repressor NrdR (Cupriavidus necator (strain ATCC 17699 / DSM 428 / KCTC 22496 / NCIMB 10442 / H16 / Stanier 337) (Ralstonia eutropha)).